The primary structure comprises 256 residues: Deoxyribose-phosphate aldolase (256 aa).

Asp-102 (proton donor/acceptor) is an active-site residue. Catalysis depends on Lys-165, which acts as the Schiff-base intermediate with acetaldehyde. Lys-197 (proton donor/acceptor) is an active-site residue.

The protein belongs to the DeoC/FbaB aldolase family. DeoC type 2 subfamily.

It is found in the cytoplasm. The enzyme catalyses 2-deoxy-D-ribose 5-phosphate = D-glyceraldehyde 3-phosphate + acetaldehyde. The protein operates within carbohydrate degradation; 2-deoxy-D-ribose 1-phosphate degradation; D-glyceraldehyde 3-phosphate and acetaldehyde from 2-deoxy-alpha-D-ribose 1-phosphate: step 2/2. Catalyzes a reversible aldol reaction between acetaldehyde and D-glyceraldehyde 3-phosphate to generate 2-deoxy-D-ribose 5-phosphate. The sequence is that of Deoxyribose-phosphate aldolase from Shewanella oneidensis (strain ATCC 700550 / JCM 31522 / CIP 106686 / LMG 19005 / NCIMB 14063 / MR-1).